A 300-amino-acid polypeptide reads, in one-letter code: Quinolinate synthase (300 aa).

Residues His23 and Ser40 each contribute to the iminosuccinate site. Cys85 lines the [4Fe-4S] cluster pocket. Residues 111-113 and Ser128 each bind iminosuccinate; that span reads YIN. Cys171 is a [4Fe-4S] cluster binding site. Iminosuccinate-binding positions include 198 to 200 and Thr215; that span reads HPE. Cys258 lines the [4Fe-4S] cluster pocket.

This sequence belongs to the quinolinate synthase family. Type 2 subfamily. [4Fe-4S] cluster serves as cofactor.

It is found in the cytoplasm. The enzyme catalyses iminosuccinate + dihydroxyacetone phosphate = quinolinate + phosphate + 2 H2O + H(+). It functions in the pathway cofactor biosynthesis; NAD(+) biosynthesis; quinolinate from iminoaspartate: step 1/1. In terms of biological role, catalyzes the condensation of iminoaspartate with dihydroxyacetone phosphate to form quinolinate. This Clostridium novyi (strain NT) protein is Quinolinate synthase.